We begin with the raw amino-acid sequence, 521 residues long: Ankyrin repeat domain-containing protein 34B (521 aa).

ANK repeat units follow at residues 9 to 38 (TESN…YINE), 42 to 79 (RGET…DPNI), 83 to 113 (FGKT…DPSL), and 117 to 146 (TGFS…AKGK). The disordered stretch occupies residues 161-188 (QTTRQYLNVPPSPGIEGNNSPSPCTSPS). Positions 177–188 (GNNSPSPCTSPS) are enriched in polar residues.

The protein belongs to the ANKRD34 family.

Its subcellular location is the cytoplasm. It localises to the nucleus. This chain is Ankyrin repeat domain-containing protein 34B (ankrd34b), found in Xenopus laevis (African clawed frog).